We begin with the raw amino-acid sequence, 238 residues long: Probable transcriptional regulatory protein VV2_1184 (238 aa).

The protein belongs to the TACO1 family.

It localises to the cytoplasm. In Vibrio vulnificus (strain CMCP6), this protein is Probable transcriptional regulatory protein VV2_1184.